The chain runs to 390 residues: GTPase Obg (390 aa).

The Obg domain occupies 1–159 (MKFVDEATIL…RDLQLELMLL (159 aa)). The interval 127–146 (NTRFKSSVNRTPRQKTMGTP) is disordered. Positions 129 to 143 (RFKSSVNRTPRQKTM) are enriched in polar residues. The 174-residue stretch at 160 to 333 (ADVGMLGMPN…LCWDVMHFII (174 aa)) folds into the OBG-type G domain. GTP is bound by residues 166 to 173 (GMPNAGKS), 191 to 195 (FTTLV), 213 to 216 (DIPG), 283 to 286 (NKID), and 314 to 316 (SAA). Mg(2+)-binding residues include Ser-173 and Thr-193. A compositionally biased stretch (acidic residues) spans 364–384 (MEAEAEEEWDDDWDEDDDEGV). The tract at residues 364-390 (MEAEAEEEWDDDWDEDDDEGVEIVYQR) is disordered.

This sequence belongs to the TRAFAC class OBG-HflX-like GTPase superfamily. OBG GTPase family. As to quaternary structure, monomer. Requires Mg(2+) as cofactor.

The protein localises to the cytoplasm. Functionally, an essential GTPase which binds GTP, GDP and possibly (p)ppGpp with moderate affinity, with high nucleotide exchange rates and a fairly low GTP hydrolysis rate. Plays a role in control of the cell cycle, stress response, ribosome biogenesis and in those bacteria that undergo differentiation, in morphogenesis control. This chain is GTPase Obg, found in Cronobacter sakazakii (strain ATCC BAA-894) (Enterobacter sakazakii).